The primary structure comprises 176 residues: Ribosome maturation factor RimM (176 aa).

Positions 100-173 (KDEYHYHDLI…WLLINPPPGL (74 aa)) constitute a PRC barrel domain.

This sequence belongs to the RimM family. In terms of assembly, binds ribosomal protein uS19.

Its subcellular location is the cytoplasm. An accessory protein needed during the final step in the assembly of 30S ribosomal subunit, possibly for assembly of the head region. Essential for efficient processing of 16S rRNA. May be needed both before and after RbfA during the maturation of 16S rRNA. It has affinity for free ribosomal 30S subunits but not for 70S ribosomes. In Prochlorococcus marinus (strain NATL2A), this protein is Ribosome maturation factor RimM.